Reading from the N-terminus, the 179-residue chain is Large ribosomal subunit protein uL5 (179 aa).

As to quaternary structure, contacts the P site tRNA. Forms a bridge to the 30S subunit in the 70S ribosome. Part of the 50S ribosomal subunit. Part of the 5S rRNA/L5/L18 subcomplex; in this organism only 2 proteins, L5 and L18 have been shown to be part of the 5S rRNA subcomplex, unlike E.coli and T.thermophilus where L25 (TL5) is also found. Has been shown to bind 5S rRNA.

Functionally, this is one of the proteins that bind and probably mediate the attachment of the 5S RNA into the large ribosomal subunit, where it forms part of the central protuberance. In the 70S ribosome it contacts protein S13 of the 30S subunit (bridge B1b), connecting the 2 subunits; this bridge is implicated in subunit movement. Contacts the P site tRNA; the 5S rRNA and some of its associated proteins might help stabilize positioning of ribosome-bound tRNAs. This Geobacillus stearothermophilus (Bacillus stearothermophilus) protein is Large ribosomal subunit protein uL5 (rplE).